The chain runs to 535 residues: Succinate-semialdehyde dehydrogenase, mitochondrial (535 aa).

Residues 1 to 47 constitute a mitochondrion transit peptide; the sequence is MATCIWLRSCGARRLGSTFPGCRLRPRAGGLVPASGPAPGPAQLRCY. At Lys126 the chain carries N6-acetyllysine; alternate. Position 126 is an N6-succinyllysine; alternate (Lys126). N6-succinyllysine is present on residues Lys135 and Lys184. NAD(+) contacts are provided by residues Arg213 and 228-231; that span reads KPAE. Arg213 lines the substrate pocket. At Lys265 the chain carries N6-acetyllysine; alternate. Position 265 is an N6-succinyllysine; alternate (Lys265). Residue 284–289 coordinates NAD(+); the sequence is GSTTTG. The Proton acceptor role is filled by Glu306. Arg334 is a binding site for substrate. Cys340 acts as the Nucleophile in catalysis. A disulfide bond links Cys340 and Cys342. The residue at position 365 (Lys365) is an N6-acetyllysine. Lys402 bears the N6-succinyllysine mark. Lys411 is modified (N6-acetyllysine). Ser498 provides a ligand contact to substrate. Phosphoserine is present on Ser499.

It belongs to the aldehyde dehydrogenase family. In terms of assembly, homotetramer.

The protein localises to the mitochondrion. It catalyses the reaction succinate semialdehyde + NAD(+) + H2O = succinate + NADH + 2 H(+). It participates in amino-acid degradation; 4-aminobutanoate degradation. With respect to regulation, redox-regulated. Inhibited under oxydizing conditions. Functionally, catalyzes one step in the degradation of the inhibitory neurotransmitter gamma-aminobutyric acid (GABA). The sequence is that of Succinate-semialdehyde dehydrogenase, mitochondrial (ALDH5A1) from Pan troglodytes (Chimpanzee).